The following is a 525-amino-acid chain: MDPFSKSPDDDDLRPEAEAARRPQPQPQPREWRFAQVFGERAAGEDVQEVDIISAIEFDKSGDHLATGDRGGRVVLFERTDSRDSASRSELERQDYPIARHPEFRYKTEFQSHEPEFDYLKSLEIEEKINKIKWCQTANNALFLLSTNDKTIKYWKVQERKVKRISVMNLNTSQSSGNGTTSSSSSSSSRAILPNGGCSEKLYNFPNNDLLFPPGGCTSLRLPVVVTGQDLNLVPRCRRVYSHAHDYHINSISNNSDGETYISADDLRINLWNLEISNQSFNIVDVKPANMEDLTEVITCAEFHPTHCNTLAYSSSKGSIRLIDLRQSALCDNHAKLFEEHEAPGSRSFFTEIIASVSDIKFARDGRHILSRDYMTLKLWDINMDSGPVATFQVHEYLRPKLCDLYENDSIFDKFECCLSGDGLRVATGSYSNLFRVFGCTPGSAEATTLEASRNPMRRQVANPTRPARTLTSLTRAVRRGGENPGVDANGNSYDLSTKLLHLAWHPTENSIACAAANSLYMYYA.

The interval 1-31 is disordered; the sequence is MDPFSKSPDDDDLRPEAEAARRPQPQPQPRE. 2 WD repeats span residues 48-87 and 124-165; these read QEVD…DSAS and EIEE…VKRI. The interval 169–191 is disordered; the sequence is NLNTSQSSGNGTTSSSSSSSSRA. The segment covering 171–189 has biased composition (low complexity); sequence NTSQSSGNGTTSSSSSSSS. 4 WD repeats span residues 244–282, 293–333, 352–390, and 495–525; these read AHDY…QSFN, DLTE…LCDN, EIIA…GPVA, and DLST…MYYA.

It belongs to the phosphatase 2A regulatory subunit B family. As to quaternary structure, PP2A consists of a common heteromeric enzyme, composed of a catalytic subunit (subunits C), a constant regulatory subunit (subunit A), and a variety of regulatory subunits such as subunits B (the R2/B/PR55/B55, R3/B''/PR72/PR130/PR59 and R5/B'/B56 families).

Its function is as follows. The B regulatory subunit may modulate substrate selectivity and catalytic activity, and may also direct the localization of the catalytic enzyme to a particular subcellular compartment. In Oryza sativa subsp. indica (Rice), this protein is Serine/threonine protein phosphatase 2A 55 kDa regulatory subunit B beta isoform.